Here is a 329-residue protein sequence, read N- to C-terminus: Peroxidase 73 (329 aa).

Residues 1 to 25 (MARFSLVVVVTLSLAISMFPDTTTA) form the signal peptide. 4 cysteine pairs are disulfide-bonded: Cys36-Cys119, Cys69-Cys74, Cys125-Cys325, and Cys204-Cys236. Catalysis depends on His67, which acts as the Proton acceptor. Ca(2+)-binding residues include Asp68, Val71, Gly73, Asp75, and Ser77. Pro167 lines the substrate pocket. His197 contributes to the heme b binding site. Residue Thr198 coordinates Ca(2+). The N-linked (GlcNAc...) asparagine glycan is linked to Asn215. Residues Asp249, Thr252, and Asp257 each contribute to the Ca(2+) site.

Belongs to the peroxidase family. Classical plant (class III) peroxidase subfamily. Requires heme b as cofactor. It depends on Ca(2+) as a cofactor. As to expression, expressed in the whole plant, with the highest expression in roots.

The protein resides in the secreted. It catalyses the reaction 2 a phenolic donor + H2O2 = 2 a phenolic radical donor + 2 H2O. Functionally, removal of H(2)O(2), oxidation of toxic reductants, biosynthesis and degradation of lignin, suberization, auxin catabolism, response to environmental stresses such as wounding, pathogen attack and oxidative stress. These functions might be dependent on each isozyme/isoform in each plant tissue. This Arabidopsis thaliana (Mouse-ear cress) protein is Peroxidase 73 (PER73).